The chain runs to 609 residues: Arginine--tRNA ligase (609 aa).

Residues 132 to 142 (ANPTSSLHVGH) carry the 'HIGH' region motif.

The protein belongs to the class-I aminoacyl-tRNA synthetase family. Monomer.

It localises to the cytoplasm. The catalysed reaction is tRNA(Arg) + L-arginine + ATP = L-arginyl-tRNA(Arg) + AMP + diphosphate. This chain is Arginine--tRNA ligase, found in Psychrobacter sp. (strain PRwf-1).